Here is a 266-residue protein sequence, read N- to C-terminus: uncharacterized protein (266 aa).

A helical membrane pass occupies residues 13–33 (IIGLMLIIFAGILFYAYILQH).

It belongs to the LicD transferase family.

The protein localises to the membrane. This is an uncharacterized protein from Rickettsia prowazekii (strain Madrid E).